The chain runs to 360 residues: Peptide chain release factor 1 (360 aa).

Gln-235 is subject to N5-methylglutamine. Residues 281–310 form a disordered region; that stretch reads AERQRQDAAQAESRRLQVGSGDRSQRIRTY.

This sequence belongs to the prokaryotic/mitochondrial release factor family. In terms of processing, methylated by PrmC. Methylation increases the termination efficiency of RF1.

It localises to the cytoplasm. Its function is as follows. Peptide chain release factor 1 directs the termination of translation in response to the peptide chain termination codons UAG and UAA. In Stenotrophomonas maltophilia (strain R551-3), this protein is Peptide chain release factor 1.